A 65-amino-acid chain; its full sequence is Beta-defensin 106A (65 aa).

Positions 1–20 (MRTFLFLFAVLFFLTPAKNE) are cleaved as a signal peptide. 3 disulfide bridges follow: C26–C53, C33–C47, and C37–C54.

The protein belongs to the beta-defensin family. As to quaternary structure, monomer. Interacts with CCR2 (via extracellular N-terminal region); this interaction may preferentially require specific tyrosine sulfation on CCR2.

The protein localises to the secreted. Its subcellular location is the membrane. Functionally, has antibacterial activity. Acts as a ligand for C-C chemokine receptor CCR2. The polypeptide is Beta-defensin 106A (DEFB106A) (Pongo pygmaeus (Bornean orangutan)).